The following is a 270-amino-acid chain: MHTVFYVSDGTAITAEVFGHAVLSQFPLVFEQVTIPFVETLEKARQVRARIDEQFRQTGLRPILFHTIVDPLVREEVLKAQASGHDFLNTFVSPLEQELGVKAEPRLHRTHGMENRKLYDDRIEAVNFALANDDGITTKEYEEADIILIGVSRCGKTPTSLYLALQFGIRAANYPFIEQDMGALVLPTALKANRHKLFGLTITPQRLHEIRNQRRANSRYSSLEQCEQELASVERLFRQEAIRFLDTSSHSVEEISAKILEATGMRRQLY.

Position 150-157 (150-157) interacts with ADP; that stretch reads GVSRCGKT.

The protein belongs to the pyruvate, phosphate/water dikinase regulatory protein family. PSRP subfamily.

The catalysed reaction is [pyruvate, water dikinase] + ADP = [pyruvate, water dikinase]-phosphate + AMP + H(+). The enzyme catalyses [pyruvate, water dikinase]-phosphate + phosphate + H(+) = [pyruvate, water dikinase] + diphosphate. Functionally, bifunctional serine/threonine kinase and phosphorylase involved in the regulation of the phosphoenolpyruvate synthase (PEPS) by catalyzing its phosphorylation/dephosphorylation. The sequence is that of Putative phosphoenolpyruvate synthase regulatory protein from Aeromonas salmonicida (strain A449).